Reading from the N-terminus, the 194-residue chain is Glycerol-3-phosphate acyltransferase (194 aa).

6 helical membrane-spanning segments follow: residues 3-23 (AGLF…GLLL), 52-72 (VGIL…LLAW), 80-100 (MQAW…FLLF), 112-132 (VFLA…ILLV), 135-155 (WRYI…IIFF), and 162-182 (LLIA…SNIS).

It belongs to the PlsY family. In terms of assembly, probably interacts with PlsX.

It is found in the cell inner membrane. The enzyme catalyses an acyl phosphate + sn-glycerol 3-phosphate = a 1-acyl-sn-glycero-3-phosphate + phosphate. It functions in the pathway lipid metabolism; phospholipid metabolism. In terms of biological role, catalyzes the transfer of an acyl group from acyl-phosphate (acyl-PO(4)) to glycerol-3-phosphate (G3P) to form lysophosphatidic acid (LPA). This enzyme utilizes acyl-phosphate as fatty acyl donor, but not acyl-CoA or acyl-ACP. The protein is Glycerol-3-phosphate acyltransferase of Trichlorobacter lovleyi (strain ATCC BAA-1151 / DSM 17278 / SZ) (Geobacter lovleyi).